The sequence spans 84 residues: Beta-cardiotoxin CTX9 (84 aa).

Residues 1-21 (MKTLLLTLVVVTIVCLDLGYT) form the signal peptide. 4 disulfides stabilise this stretch: C24–C43, C36–C61, C65–C76, and C77–C82.

The protein belongs to the three-finger toxin family. Short-chain subfamily. Aminergic toxin sub-subfamily. Expressed by the venom gland.

It localises to the secreted. In terms of biological role, acts as a beta-blocker by binding to beta-1 and beta-2 adrenergic receptors (ADRB1 and ADRB2). It dose-dependently decreases the heart rate (bradycardia), whereas conventional cardiotoxins increases it. At 100 mg/kg, intraperitoneal injection into mice provokes labored breathing, impaired locomotion, lack of response to external stimuli, and death (after 30 minutes). The chain is Beta-cardiotoxin CTX9 from Ophiophagus hannah (King cobra).